A 361-amino-acid polypeptide reads, in one-letter code: Protein-glutamate methylesterase/protein-glutamine glutaminase 1 (361 aa).

Residues 10–127 (KVLVVDDSAL…REGIEEKAQE (118 aa)) form the Response regulatory domain. 4-aspartylphosphate is present on aspartate 61. The CheB-type methylesterase domain maps to 167–359 (FATTDKLIAV…ASVKRWYAEN (193 aa)). Catalysis depends on residues serine 179, histidine 205, and aspartate 301.

The protein belongs to the CheB family. Post-translationally, phosphorylated by CheA. Phosphorylation of the N-terminal regulatory domain activates the methylesterase activity.

Its subcellular location is the cytoplasm. It carries out the reaction [protein]-L-glutamate 5-O-methyl ester + H2O = L-glutamyl-[protein] + methanol + H(+). It catalyses the reaction L-glutaminyl-[protein] + H2O = L-glutamyl-[protein] + NH4(+). In terms of biological role, involved in chemotaxis. Part of a chemotaxis signal transduction system that modulates chemotaxis in response to various stimuli. Catalyzes the demethylation of specific methylglutamate residues introduced into the chemoreceptors (methyl-accepting chemotaxis proteins or MCP) by CheR. Also mediates the irreversible deamidation of specific glutamine residues to glutamic acid. The protein is Protein-glutamate methylesterase/protein-glutamine glutaminase 1 of Hahella chejuensis (strain KCTC 2396).